A 415-amino-acid chain; its full sequence is Serine hydroxymethyltransferase (415 aa).

(6S)-5,6,7,8-tetrahydrofolate contacts are provided by residues leucine 119 and 123–125 (GHL). At lysine 228 the chain carries N6-(pyridoxal phosphate)lysine. (6S)-5,6,7,8-tetrahydrofolate is bound at residue 353–355 (SPF).

This sequence belongs to the SHMT family. Homodimer. The cofactor is pyridoxal 5'-phosphate.

It localises to the cytoplasm. The enzyme catalyses (6R)-5,10-methylene-5,6,7,8-tetrahydrofolate + glycine + H2O = (6S)-5,6,7,8-tetrahydrofolate + L-serine. It participates in one-carbon metabolism; tetrahydrofolate interconversion. The protein operates within amino-acid biosynthesis; glycine biosynthesis; glycine from L-serine: step 1/1. Its function is as follows. Catalyzes the reversible interconversion of serine and glycine with tetrahydrofolate (THF) serving as the one-carbon carrier. Also exhibits THF-independent aldolase activity toward beta-hydroxyamino acids, producing glycine and aldehydes, via a retro-aldol mechanism. This is Serine hydroxymethyltransferase from Halorubrum lacusprofundi (strain ATCC 49239 / DSM 5036 / JCM 8891 / ACAM 34).